The chain runs to 444 residues: Probable glycine dehydrogenase (decarboxylating) subunit 1 (444 aa).

Belongs to the GcvP family. N-terminal subunit subfamily. The glycine cleavage system is composed of four proteins: P, T, L and H. In this organism, the P 'protein' is a heterodimer of two subunits.

It carries out the reaction N(6)-[(R)-lipoyl]-L-lysyl-[glycine-cleavage complex H protein] + glycine + H(+) = N(6)-[(R)-S(8)-aminomethyldihydrolipoyl]-L-lysyl-[glycine-cleavage complex H protein] + CO2. Functionally, the glycine cleavage system catalyzes the degradation of glycine. The P protein binds the alpha-amino group of glycine through its pyridoxal phosphate cofactor; CO(2) is released and the remaining methylamine moiety is then transferred to the lipoamide cofactor of the H protein. The chain is Probable glycine dehydrogenase (decarboxylating) subunit 1 from Chlorobaculum tepidum (strain ATCC 49652 / DSM 12025 / NBRC 103806 / TLS) (Chlorobium tepidum).